The chain runs to 80 residues: Exodeoxyribonuclease 7 small subunit (80 aa).

Belongs to the XseB family. Heterooligomer composed of large and small subunits.

The protein localises to the cytoplasm. The enzyme catalyses Exonucleolytic cleavage in either 5'- to 3'- or 3'- to 5'-direction to yield nucleoside 5'-phosphates.. Bidirectionally degrades single-stranded DNA into large acid-insoluble oligonucleotides, which are then degraded further into small acid-soluble oligonucleotides. This Rickettsia felis (strain ATCC VR-1525 / URRWXCal2) (Rickettsia azadi) protein is Exodeoxyribonuclease 7 small subunit.